The following is a 536-amino-acid chain: Enterobactin synthase component E (536 aa).

Residues Asn-235, Ser-240, Gly-309, Val-331, Ala-335, Asp-415, and Lys-432 each coordinate substrate. The phosphopantetheine binding stretch occupies residues 438–439; the sequence is GG. Lys-441 is a binding site for substrate.

This sequence belongs to the ATP-dependent AMP-binding enzyme family. EntE subfamily. In terms of assembly, proteins EntB, EntD, EntE, and EntF form a multienzyme complex called enterobactin synthase. Monomer. EntA and EntE interact together.

The protein localises to the membrane. The enzyme catalyses 3 2,3-dihydroxybenzoate + 3 L-serine + 6 ATP = enterobactin + 6 AMP + 6 diphosphate + 4 H(+). It carries out the reaction 2,3-dihydroxybenzoate + holo-[ACP] + ATP = 2,3-dihydroxybenzoyl-[ACP] + AMP + diphosphate. The catalysed reaction is 2,3-dihydroxybenzoyl-5'-AMP + holo-[ACP] = 2,3-dihydroxybenzoyl-[ACP] + AMP + H(+). Its pathway is siderophore biosynthesis; enterobactin biosynthesis. Inhibited by the adenylate analogs, 5'-O-[N-(salicyl)sulfamoyl]adenosine (Sal-AMS) and 5'-O-[N-(2,3-dihydroxybenzoyl)sulfamoyl]adenosine (DHB-AMS). Adenylation of 2,3-dihydroxybenzoate (DHB) is enhanced by a protein-protein interaction between the EntA and EntE. In terms of biological role, involved in the biosynthesis of the siderophore enterobactin (enterochelin), which is a macrocyclic trimeric lactone of N-(2,3-dihydroxybenzoyl)-serine. The serine trilactone serves as a scaffolding for the three catechol functionalities that provide hexadentate coordination for the tightly ligated iron(2+) atoms. EntE processes via a two-step adenylation-ligation reaction (bi-uni-uni-bi ping-pong mechanism). First, it catalyzes the activation of the carboxylate group of 2,3-dihydroxy-benzoate (DHB), via a reversible ATP-dependent pyrophosphate exchange reactions to yield the acyladenylate intermediate 2,3-dihydroxybenzoyl-AMP. It can also transfer AMP to salicylate, 2,4-dihydroxybenzoate, gentisate and 2,3,4-trihydroxybenzoate. In the second step, DHB is transferred from 2,3-dihydroxybenzoyl-AMP onto the phosphopantetheinylated EntB (holo-EntB) to form DHB-holo-EntB. Then this product will serve in the formation of the amide bond between 2,3-dihydroxybenzoate (DHB) and L-serine. It can also transfer adenylated salicylate to holo-EntB. In Escherichia coli (strain K12), this protein is Enterobactin synthase component E.